We begin with the raw amino-acid sequence, 209 residues long: Ribosomal RNA large subunit methyltransferase E (209 aa).

The S-adenosyl-L-methionine site is built by Gly-63, Trp-65, Asp-83, Asp-99, and Asp-124. Lys-164 acts as the Proton acceptor in catalysis.

The protein belongs to the class I-like SAM-binding methyltransferase superfamily. RNA methyltransferase RlmE family.

Its subcellular location is the cytoplasm. It carries out the reaction uridine(2552) in 23S rRNA + S-adenosyl-L-methionine = 2'-O-methyluridine(2552) in 23S rRNA + S-adenosyl-L-homocysteine + H(+). Functionally, specifically methylates the uridine in position 2552 of 23S rRNA at the 2'-O position of the ribose in the fully assembled 50S ribosomal subunit. In Pseudoalteromonas atlantica (strain T6c / ATCC BAA-1087), this protein is Ribosomal RNA large subunit methyltransferase E.